The primary structure comprises 242 residues: Protein HTATIP2 (242 aa).

Position 2 is an N-acetylalanine (alanine 2). Residues alanine 2–glycine 25 form a required for interaction with elongation factor EEF1A1 region. Positions 27, 28, 29, 30, 52, 53, 92, 93, 143, 147, 170, and 178 each coordinate NADPH. The Proton acceptor role is filled by tyrosine 143. Lysine 147 is an active-site residue.

Monomer. Forms homodimers during oxidative stress. Interacts (via N-terminus) with elongation factor EEF1A1 (via middle-region); the interaction is direct and competes with EEF1A1 binding to guanyl-nucleotide exchange factor EEF1B2, thereby inhibiting GDP for GTP exchange and reactivation of EEF1A1. Interacts with nuclear transport receptors XPO4, IPO5/RANBP5, IPO7, IPO9 and KPNB1 as well as GCN1L1/GCN1 and LRPPRC probably through their HEAT repeats. Binds NCOA5/CIA.

It is found in the cytoplasm. Functionally, represses translation by preventing reactivation of elongation factor eEF1A. May also inhibit nuclear import by competing with nuclear import substrates for binding to a subset of nuclear transport receptors. Has additionally been proposed to act as a redox sensor involved in cellular oxidative stress surveillance. The sequence is that of Protein HTATIP2 (HTATIP2) from Gorilla gorilla gorilla (Western lowland gorilla).